A 417-amino-acid polypeptide reads, in one-letter code: Calreticulin (417 aa).

Positions 1–17 (MLLSVPLLLGLLGLAVA) are cleaved as a signal peptide. An N-domain region spans residues 18–197 (EPAVYFKEQF…NSQVESGSLE (180 aa)). Gln26 provides a ligand contact to Ca(2+). Lys48 carries the post-translational modification N6-acetyllysine. Lys62 and Lys64 together coordinate Ca(2+). The residue at position 64 (Lys64) is an N6-(2-hydroxyisobutyryl)lysine. Cys105 and Cys137 are joined by a disulfide. An alpha-D-glucoside contacts are provided by Tyr109, Lys111, Tyr128, and Asp135. An N6-acetyllysine modification is found at Lys159. The 1-1 repeat unit spans residues 191-202 (VESGSLEDDWDF). Positions 191–255 (VESGSLEDDW…DAKKPEDWDE (65 aa)) are 4 X approximate repeats. Residues 193 to 278 (SGSLEDDWDF…PEYKGEWKPR (86 aa)) are disordered. Residues 198–308 (DDWDFLPPKK…YSPDPSIYAY (111 aa)) are P-domain. The span at 207 to 251 (KIKDPDASKPEDWDERAKIDDPTDSKPEDWDKPEHIPDPDAKKPE) shows a compositional bias: basic and acidic residues. N6-acetyllysine is present on Lys209. A run of 6 repeats spans residues 210 to 221 (DPDASKPEDWDE), 227 to 238 (DPTDSKPEDWDK), 244 to 255 (DPDAKKPEDWDE), 259 to 269 (GEWEPPVIQNP), 273 to 283 (GEWKPRQIDNP), and 287 to 297 (GTWIHPEIDNP). Positions 237–270 (DKPEHIPDPDAKKPEDWDEEMDGEWEPPVIQNPE) are interaction with PPIB. Positions 252 to 261 (DWDEEMDGEW) are enriched in acidic residues. The tract at residues 259 to 297 (GEWEPPVIQNPEYKGEWKPRQIDNPDYKGTWIHPEIDNP) is 3 X approximate repeats. The segment at 309 to 417 (DNFGVLGLDL…DVPGQAKDEL (109 aa)) is C-domain. Asp317 contributes to the an alpha-D-glucoside binding site. Ca(2+) is bound at residue Asp328. An N-linked (GlcNAc...) asparagine glycan is attached at Asn344. The tract at residues 350–417 (TKAAEKQMKD…DVPGQAKDEL (68 aa)) is disordered. The segment covering 352-379 (AAEKQMKDKQDEEQRLKEEEEDKKRKEE) has biased composition (basic and acidic residues). Over residues 380 to 409 (EEAEDKEDDEDKDEDEEDEEDKEEDEEEDV) the composition is skewed to acidic residues. Residues 414 to 417 (KDEL) carry the Prevents secretion from ER motif.

This sequence belongs to the calreticulin family. As to quaternary structure, monomer. Component of an EIF2 complex at least composed of CELF1/CUGBP1, CALR, CALR3, EIF2S1, EIF2S2, HSP90B1 and HSPA5. Interacts with PDIA3/ERp57 and SPACA9. Interacts with TRIM21. Interacts with NR3C1. Interacts with PPIB. Interacts (via P-domain) with PDIA5. Interacts with GABARAP. Interacts with HLA-E-B2M and HLA-G-B2M complexes. Interacts with HLA-F. Interacts with CLCC1.

The protein resides in the endoplasmic reticulum lumen. It localises to the cytoplasm. It is found in the cytosol. Its subcellular location is the secreted. The protein localises to the extracellular space. The protein resides in the extracellular matrix. It localises to the cell surface. It is found in the sarcoplasmic reticulum lumen. Its subcellular location is the cytoplasmic vesicle. The protein localises to the secretory vesicle. The protein resides in the cortical granule. It localises to the cytolytic granule. Its function is as follows. Calcium-binding chaperone that promotes folding, oligomeric assembly and quality control in the endoplasmic reticulum (ER) via the calreticulin/calnexin cycle. This lectin interacts transiently with almost all of the monoglucosylated glycoproteins that are synthesized in the ER. Interacts with the DNA-binding domain of NR3C1 and mediates its nuclear export. Involved in maternal gene expression regulation. May participate in oocyte maturation via the regulation of calcium homeostasis. Present in the cortical granules of non-activated oocytes, is exocytosed during the cortical reaction in response to oocyte activation and might participate in the block to polyspermy. The polypeptide is Calreticulin (Homo sapiens (Human)).